The primary structure comprises 882 residues: Translation initiation factor IF-2 (882 aa).

3 stretches are compositionally biased toward polar residues: residues 38-56 (NDSNSFVDLHNNSNKAEYS), 97-124 (GGYSQNRDNRTGGYSQNRDNRTGGYSQN), and 140-192 (GGYS…NRDS). 2 disordered regions span residues 38 to 192 (NDSN…NRDS) and 236 to 274 (STPAADSENSKELNRKLGEKKKQQQESQKSYKRKKAETE). The segment covering 243–259 (ENSKELNRKLGEKKKQQ) has biased composition (basic and acidic residues). The region spanning 380-553 (EKPPVITIMG…DMMLLKANPS (174 aa)) is the tr-type G domain. Residues 389 to 396 (GHVDHGKT) are G1. 389-396 (GHVDHGKT) provides a ligand contact to GTP. The G2 stretch occupies residues 414–418 (GITQH). Residues 435-438 (DTPG) are G3. GTP-binding positions include 435–439 (DTPGH) and 489–492 (NKID). Positions 489–492 (NKID) are G4. The G5 stretch occupies residues 525–527 (SAL).

It belongs to the TRAFAC class translation factor GTPase superfamily. Classic translation factor GTPase family. IF-2 subfamily.

The protein resides in the cytoplasm. Functionally, one of the essential components for the initiation of protein synthesis. Protects formylmethionyl-tRNA from spontaneous hydrolysis and promotes its binding to the 30S ribosomal subunits. Also involved in the hydrolysis of GTP during the formation of the 70S ribosomal complex. This Borreliella burgdorferi (strain ATCC 35210 / DSM 4680 / CIP 102532 / B31) (Borrelia burgdorferi) protein is Translation initiation factor IF-2 (infB).